A 360-amino-acid chain; its full sequence is Alanine racemase (360 aa).

Lys34 (proton acceptor; specific for D-alanine) is an active-site residue. Position 34 is an N6-(pyridoxal phosphate)lysine (Lys34). Arg129 contributes to the substrate binding site. The active-site Proton acceptor; specific for L-alanine is the Tyr254. Substrate is bound at residue Met302.

Belongs to the alanine racemase family. Requires pyridoxal 5'-phosphate as cofactor.

The catalysed reaction is L-alanine = D-alanine. It functions in the pathway amino-acid biosynthesis; D-alanine biosynthesis; D-alanine from L-alanine: step 1/1. In terms of biological role, catalyzes the interconversion of L-alanine and D-alanine. May also act on other amino acids. The chain is Alanine racemase (alr) from Pectobacterium atrosepticum (strain SCRI 1043 / ATCC BAA-672) (Erwinia carotovora subsp. atroseptica).